A 255-amino-acid polypeptide reads, in one-letter code: Indole-3-glycerol phosphate synthase (255 aa).

The protein belongs to the TrpC family.

The enzyme catalyses 1-(2-carboxyphenylamino)-1-deoxy-D-ribulose 5-phosphate + H(+) = (1S,2R)-1-C-(indol-3-yl)glycerol 3-phosphate + CO2 + H2O. It participates in amino-acid biosynthesis; L-tryptophan biosynthesis; L-tryptophan from chorismate: step 4/5. The polypeptide is Indole-3-glycerol phosphate synthase (Streptococcus sanguinis (strain SK36)).